A 233-amino-acid chain; its full sequence is Large ribosomal subunit protein uL1 (233 aa).

This sequence belongs to the universal ribosomal protein uL1 family. Part of the 50S ribosomal subunit.

Its function is as follows. Binds directly to 23S rRNA. The L1 stalk is quite mobile in the ribosome, and is involved in E site tRNA release. Protein L1 is also a translational repressor protein, it controls the translation of the L11 operon by binding to its mRNA. This Shewanella oneidensis (strain ATCC 700550 / JCM 31522 / CIP 106686 / LMG 19005 / NCIMB 14063 / MR-1) protein is Large ribosomal subunit protein uL1.